The chain runs to 76 residues: DNA-directed RNA polymerase subunit epsilon (76 aa).

Belongs to the RNA polymerase subunit epsilon family. RNAP is composed of a core of 2 alpha, a beta and a beta' subunit. The core is associated with a delta subunit, and at least one of epsilon or omega. When a sigma factor is associated with the core the holoenzyme is formed, which can initiate transcription.

It catalyses the reaction RNA(n) + a ribonucleoside 5'-triphosphate = RNA(n+1) + diphosphate. A non-essential component of RNA polymerase (RNAP). This is DNA-directed RNA polymerase subunit epsilon from Streptococcus equi subsp. equi (strain 4047).